A 402-amino-acid polypeptide reads, in one-letter code: Digeranylgeranylglycerophospholipid reductase (402 aa).

Residues Gly15, Glu34, Cys45, Ala46, Gly48, Arg99, Ala123, Asp280, Gly292, and Ile293 each contribute to the FAD site.

This sequence belongs to the geranylgeranyl reductase family. DGGGPL reductase subfamily. FAD serves as cofactor.

It carries out the reaction a 2,3-bis-O-phytanyl-sn-glycerol 1-phospholipid + 8 oxidized 2[4Fe-4S]-[ferredoxin] = a 2,3-bis-O-(geranylgeranyl)-sn-glycerol 1-phospholipid + 8 reduced 2[4Fe-4S]-[ferredoxin] + 16 H(+). The catalysed reaction is 2,3-bis-O-(phytanyl)-sn-glycerol 1-phosphate + 8 oxidized 2[4Fe-4S]-[ferredoxin] = 2,3-bis-O-(geranylgeranyl)-sn-glycerol 1-phosphate + 8 reduced 2[4Fe-4S]-[ferredoxin] + 16 H(+). The enzyme catalyses a 2,3-bis-O-phytanyl-sn-glycerol 1-phospholipid + 8 A = a 2,3-bis-O-(geranylgeranyl)-sn-glycerol 1-phospholipid + 8 AH2. It catalyses the reaction CDP-2,3-bis-O-(geranylgeranyl)-sn-glycerol + 8 AH2 = CDP-2,3-bis-O-(phytanyl)-sn-glycerol + 8 A. It carries out the reaction archaetidylserine + 8 AH2 = 2,3-bis-O-phytanyl-sn-glycero-3-phospho-L-serine + 8 A. It participates in membrane lipid metabolism; glycerophospholipid metabolism. Is involved in the reduction of 2,3-digeranylgeranylglycerophospholipids (unsaturated archaeols) into 2,3-diphytanylglycerophospholipids (saturated archaeols) in the biosynthesis of archaeal membrane lipids. Catalyzes the formation of archaetidic acid (2,3-di-O-phytanyl-sn-glyceryl phosphate) from 2,3-di-O-geranylgeranylglyceryl phosphate (DGGGP) via the hydrogenation of each double bond of the isoprenoid chains. Is also probably able to reduce double bonds of geranyl groups in CDP-2,3-bis-O-(geranylgeranyl)-sn-glycerol and archaetidylserine, thus acting at various stages in the biosynthesis of archaeal membrane lipids. This is Digeranylgeranylglycerophospholipid reductase from Methanospirillum hungatei JF-1 (strain ATCC 27890 / DSM 864 / NBRC 100397 / JF-1).